Consider the following 370-residue polypeptide: Quinolinate synthase (370 aa).

Residues His62 and Ser83 each contribute to the iminosuccinate site. Cys128 is a binding site for [4Fe-4S] cluster. Residues 154-156 (YAN) and Ser171 each bind iminosuccinate. Cys215 lines the [4Fe-4S] cluster pocket. Residues 241–243 (HPE) and Thr258 each bind iminosuccinate. Cys312 lines the [4Fe-4S] cluster pocket.

Belongs to the quinolinate synthase family. Type 1 subfamily. [4Fe-4S] cluster serves as cofactor.

The protein resides in the cytoplasm. The enzyme catalyses iminosuccinate + dihydroxyacetone phosphate = quinolinate + phosphate + 2 H2O + H(+). Its pathway is cofactor biosynthesis; NAD(+) biosynthesis; quinolinate from iminoaspartate: step 1/1. In terms of biological role, catalyzes the condensation of iminoaspartate with dihydroxyacetone phosphate to form quinolinate. This chain is Quinolinate synthase, found in Neisseria meningitidis serogroup C / serotype 2a (strain ATCC 700532 / DSM 15464 / FAM18).